Consider the following 432-residue polypeptide: Probable pectate lyase 22 (432 aa).

The signal sequence occupies residues 1–45 (MFRPNSLLIPSNLSTTKSQRNTMLNSSYLSFALIFFCCILFSALA). A glycan (N-linked (GlcNAc...) asparagine) is linked at Asn-65. The Ca(2+) site is built by Asp-228, Asp-252, and Asp-256. The active site involves Arg-308.

The protein belongs to the polysaccharide lyase 1 family. It depends on Ca(2+) as a cofactor.

The catalysed reaction is Eliminative cleavage of (1-&gt;4)-alpha-D-galacturonan to give oligosaccharides with 4-deoxy-alpha-D-galact-4-enuronosyl groups at their non-reducing ends.. It functions in the pathway glycan metabolism; pectin degradation; 2-dehydro-3-deoxy-D-gluconate from pectin: step 2/5. The chain is Probable pectate lyase 22 from Arabidopsis thaliana (Mouse-ear cress).